The primary structure comprises 160 residues: Sec-independent protein translocase protein TatB (160 aa).

The helical transmembrane segment at 1 to 21 threads the bilayer; it reads MFGMGFFEILVVLIVAIIFLG. The interval 118 to 160 is disordered; sequence HLNEEVSNEEALNKEVSSDESPKEVQLTTDNNAKEHDKEKEHV. 2 stretches are compositionally biased toward basic and acidic residues: residues 128-140 and 149-160; these read ALNK…ESPK and NAKEHDKEKEHV.

The protein belongs to the TatB family. The Tat system comprises two distinct complexes: a TatABC complex, containing multiple copies of TatA, TatB and TatC subunits, and a separate TatA complex, containing only TatA subunits. Substrates initially bind to the TatABC complex, which probably triggers association of the separate TatA complex to form the active translocon.

It is found in the cell inner membrane. Its function is as follows. Part of the twin-arginine translocation (Tat) system that transports large folded proteins containing a characteristic twin-arginine motif in their signal peptide across membranes. Together with TatC, TatB is part of a receptor directly interacting with Tat signal peptides. TatB may form an oligomeric binding site that transiently accommodates folded Tat precursor proteins before their translocation. This is Sec-independent protein translocase protein TatB from Helicobacter pylori (strain J99 / ATCC 700824) (Campylobacter pylori J99).